Consider the following 397-residue polypeptide: Chorismate synthase (397 aa).

The NADP(+) site is built by Arg40 and Arg46. FMN contacts are provided by residues Arg129 to Ser131, Gln257 to Ala258, Gly302, Lys317 to Ser321, and Arg343.

This sequence belongs to the chorismate synthase family. In terms of assembly, homotetramer. FMNH2 is required as a cofactor.

It carries out the reaction 5-O-(1-carboxyvinyl)-3-phosphoshikimate = chorismate + phosphate. The protein operates within metabolic intermediate biosynthesis; chorismate biosynthesis; chorismate from D-erythrose 4-phosphate and phosphoenolpyruvate: step 7/7. Catalyzes the anti-1,4-elimination of the C-3 phosphate and the C-6 proR hydrogen from 5-enolpyruvylshikimate-3-phosphate (EPSP) to yield chorismate, which is the branch point compound that serves as the starting substrate for the three terminal pathways of aromatic amino acid biosynthesis. This reaction introduces a second double bond into the aromatic ring system. This Chlorobium luteolum (strain DSM 273 / BCRC 81028 / 2530) (Pelodictyon luteolum) protein is Chorismate synthase.